The sequence spans 209 residues: RNA chaperone ProQ (209 aa).

The tract at residues 101–155 (LAESKAKVQARRKEQAQKAREEGKAKAKPAANKKPQQPRRTNKPKVQKPTKPVET) is disordered. Residues 111–125 (RRKEQAQKAREEGKA) show a composition bias toward basic and acidic residues. The span at 136-148 (QQPRRTNKPKVQK) shows a compositional bias: basic residues.

This sequence belongs to the ProQ family.

Its subcellular location is the cytoplasm. In terms of biological role, RNA chaperone with significant RNA binding, RNA strand exchange and RNA duplexing activities. The protein is RNA chaperone ProQ of Vibrio parahaemolyticus serotype O3:K6 (strain RIMD 2210633).